Here is a 103-residue protein sequence, read N- to C-terminus: Large ribosomal subunit protein bL21 (103 aa).

It belongs to the bacterial ribosomal protein bL21 family. Part of the 50S ribosomal subunit. Contacts protein L20.

Its function is as follows. This protein binds to 23S rRNA in the presence of protein L20. The sequence is that of Large ribosomal subunit protein bL21 from Tolumonas auensis (strain DSM 9187 / NBRC 110442 / TA 4).